The primary structure comprises 193 residues: Dirigent protein 11 (193 aa).

Residues 1-33 form the signal peptide; it reads MLQITNMATPFLLLLLPLIFSTVLLLTITVTQS. N78 and N136 each carry an N-linked (GlcNAc...) asparagine glycan.

The protein belongs to the plant dirigent protein family. In terms of assembly, homodimer.

The protein localises to the secreted. It localises to the extracellular space. The protein resides in the apoplast. In terms of biological role, dirigent proteins impart stereoselectivity on the phenoxy radical-coupling reaction, yielding optically active lignans from two molecules of coniferyl alcohol in the biosynthesis of lignans, flavonolignans, and alkaloids and thus plays a central role in plant secondary metabolism. This is Dirigent protein 11 (DIR11) from Arabidopsis thaliana (Mouse-ear cress).